Here is a 209-residue protein sequence, read N- to C-terminus: Dual specificity phosphatase 29 (209 aa).

Residues 45 to 193 (HVNEVWPNLY…LRELDIKLAL (149 aa)) enclose the Tyrosine-protein phosphatase domain. 137–144 (NCAMGRSR) provides a ligand contact to substrate. Cysteine 138 functions as the Phosphocysteine intermediate in the catalytic mechanism.

The protein belongs to the protein-tyrosine phosphatase family. Non-receptor class dual specificity subfamily.

The protein localises to the cytoplasm. It is found in the nucleus. It catalyses the reaction O-phospho-L-tyrosyl-[protein] + H2O = L-tyrosyl-[protein] + phosphate. It carries out the reaction O-phospho-L-seryl-[protein] + H2O = L-seryl-[protein] + phosphate. The enzyme catalyses O-phospho-L-threonyl-[protein] + H2O = L-threonyl-[protein] + phosphate. Dual specificity phosphatase able to dephosphorylate phosphotyrosine, phosphoserine and phosphothreonine residues, with a preference for phosphotyrosine as a substrate. Its function is as follows. Dual specificity phosphatase able to dephosphorylate phosphotyrosine, phosphoserine and phosphothreonine residues within the same substrate, with a preference for phosphotyrosine as a substrate. Involved in the modulation of AMPK and MAPK1/2 signaling pathway. The protein is Dual specificity phosphatase 29 (dusp29) of Xenopus laevis (African clawed frog).